Here is a 2849-residue protein sequence, read N- to C-terminus: Polycystin-1-like protein 1 (2849 aa).

The Extracellular segment spans residues 1-1748 (MAEEAAQNIS…SDISKLQSHP (1748 aa)). 13 N-linked (GlcNAc...) asparagine glycosylation sites follow: Asn8, Asn295, Asn338, Asn376, Asn447, Asn482, Asn514, Asn605, Asn657, Asn751, Asn875, Asn926, and Asn937. PKD domains lie at 508–590 (SVSV…VQKK) and 592–673 (VANR…VCEP). An REJ domain is found at 674 to 1571 (CQPPLVKNMG…GEEDGLDNRR (898 aa)). Positions 970–987 (NLLPTEPGTADPDATTTP) are enriched in low complexity. 2 disordered regions span residues 970–1068 (NLLP…PHLS) and 1081–1118 (IPSG…DPSL). The segment covering 1053–1068 (RSERSQPTHSPDPHLS) has biased composition (basic and acidic residues). N-linked (GlcNAc...) asparagine glycosylation is found at Asn1233, Asn1301, Asn1306, Asn1572, Asn1681, and Asn1716. The GAIN-B domain maps to 1587–1735 (QFTELSENPQ…ALLRRKLKAS (149 aa)). Cys1691 and Cys1717 are joined by a disulfide. Residues 1691–1735 (CLFWDKREWKSERFSPQPGTSPEKVNCSYHRLAAFALLRRKLKAS) are GPS. A helical transmembrane segment spans residues 1749–1769 (ENLLPSIFIMGSVILYGFLVA). The Cytoplasmic segment spans residues 1770–1956 (KSRQVDHHEK…SSSRYLHTPR (187 aa)). Residues 1796–1913 (QLYAVVIDTG…HDGRVERELT (118 aa)) enclose the PLAT domain. A helical transmembrane segment spans residues 1957 to 1977 (LTVSFSLLCVYACLTALVAAG). The Extracellular segment spans residues 1978-1992 (GQEQPHLDVSPTLGS). Residues 1993–2013 (FRVGLLCTLLASPGAQLLSLL) form a helical membrane-spanning segment. The Cytoplasmic segment spans residues 2014-2135 (FRLSKEAPGS…SRALQPWWSS (122 aa)). Residues 2023 to 2089 (SARVEPHSPL…GTACPAPKLQ (67 aa)) form a disordered region. The chain crosses the membrane as a helical span at residues 2136–2156 (AVWAICGTASLACSLGTGFLA). The Extracellular segment spans residues 2157–2174 (YRFGQEQCVQWLHLLSLS). Residues 2175 to 2195 (VVCCIFITQPLMVCLMALGFA) traverse the membrane as a helical segment. Residues 2196-2281 (WKRRADNHFF…QRMRRESRTR (86 aa)) are Cytoplasmic-facing. A helical transmembrane segment spans residues 2282 to 2302 (AALRDISMDILMLLLLLCVIY). At 2303–2522 (GRFSQDEYSL…FRSDSALQYH (220 aa)) the chain is on the extracellular side. Residue Asn2426 is glycosylated (N-linked (GlcNAc...) asparagine). The chain crosses the membrane as a helical span at residues 2523–2543 (LMLPQLVFLALSLIHLCVQLY). The Cytoplasmic segment spans residues 2544-2562 (RMMDKGVLSYWRKPRNWLE). The chain crosses the membrane as a helical span at residues 2563–2583 (LSVVGVSLTYYAVSGHLVTLA). Residues 2584–2616 (GDVTNQFHRGLCRAFMDLTLMASWNQRARWLRG) lie on the Extracellular side of the membrane. The chain crosses the membrane as a helical span at residues 2617 to 2637 (ILLFLFTLKCVYLPGIQNTMA). Topologically, residues 2638-2646 (SCSSMMRHS) are cytoplasmic. A helical membrane pass occupies residues 2647-2667 (LPSIFVAGLVGALMLAALSHL). At 2668-2711 (HRFLLSMWVLPPGTFTDAFPGLLFHFPRRSQKDCLLGLSKSDQR) the chain is on the extracellular side. Residues 2712 to 2732 (AMACYFGILLIVSATLCFGML) form a helical membrane-spanning segment. Residues 2733–2849 (RGFLMTLPQK…AAEPADIKDF (117 aa)) are Cytoplasmic-facing.

Belongs to the polycystin family. In terms of assembly, heterodimer. Interacts with PKD2 to form a calcium channel. Interacts with PKD2L1; to form ciliary calcium channel. May interact with GNA12, GNAS, GNAI1 and GNAI2. Detected in testis and in fetal and adult heart.

The protein localises to the cell projection. The protein resides in the cilium membrane. Component of a calcium-permeant ion channel formed by PKD1L2 and PKD1L1 in primary cilia, where it controls cilium calcium concentration, without affecting cytoplasmic calcium concentration, and regulates sonic hedgehog/SHH signaling and GLI2 transcription. The PKD1L1:PKD2L1 channel complex is mechanosensitive only at high pressures and is highly temperature sensitive. Also involved in left/right axis specification downstream of nodal flow by forming a complex with PKD2 in cilia to facilitate flow detection in left/right patterning. May function as a G-protein-coupled receptor. In Homo sapiens (Human), this protein is Polycystin-1-like protein 1.